The sequence spans 37 residues: Large ribosomal subunit protein bL36 (37 aa).

This sequence belongs to the bacterial ribosomal protein bL36 family.

The protein is Large ribosomal subunit protein bL36 of Geobacillus kaustophilus (strain HTA426).